We begin with the raw amino-acid sequence, 413 residues long: SWIRM domain-containing protein FUN19 (413 aa).

Low complexity predominate over residues 35–51 (KASNNNNDSNKNGLNMS). 3 disordered regions span residues 35 to 55 (KASN…DYSN), 189 to 211 (YNDD…PLAS), and 249 to 271 (YSPQ…PSAS). Residue Thr-194 is modified to Phosphothreonine. The span at 200 to 211 (SSSSRLPSPLAS) shows a compositional bias: low complexity. Phosphoserine occurs at positions 207 and 211. Positions 316-413 (LKIEWKGSPM…LQDSNFTKYL (98 aa)) constitute an SWIRM domain.

The polypeptide is SWIRM domain-containing protein FUN19 (FUN19) (Saccharomyces cerevisiae (strain ATCC 204508 / S288c) (Baker's yeast)).